Consider the following 332-residue polypeptide: MSPPAAIFEPAVAPSPSLKAKVLVPETVPASGTSQTHLLDHFGGKWDDFKFAPIRESQVSRAMTRRYFQDLDKYAESDIVIVGAGSCGLSTAYVLAKARPDLKIAIIEASVSPGGGAWLGGQLFSAMVLRRPAEVFLNEIGVPFEEDPANPNFVVVKHASLFTSTLMSKVLSFPNVKLFNATAVEDLVTRPSASGDAKDTQIAGVVVNWTLVTLHHDDHSCMDPNTINAPVVISTTGHDGPFGAFCAKRLVSMNTVDKLGGMRGLDMNSAEDAIVKNTREVAKGLIIGGMELSEIDGFNRMGPTFGAMVLSGVKAAEEALKVFDQRQRECAE.

Substrate contacts are provided by residues cysteine 87, 108-109 (EA), glycine 116, and valine 184. Residue cysteine 221 is modified to 2,3-didehydroalanine (Cys). Residues aspartate 223, histidine 238, methionine 290, and 300–302 (RMG) each bind substrate.

This sequence belongs to the THI4 family. As to quaternary structure, homooctamer. Fe cation serves as cofactor. During the catalytic reaction, a sulfide is transferred from Cys-221 to a reaction intermediate, generating a dehydroalanine residue.

The protein localises to the cytoplasm. Its subcellular location is the nucleus. The enzyme catalyses [ADP-thiazole synthase]-L-cysteine + glycine + NAD(+) = [ADP-thiazole synthase]-dehydroalanine + ADP-5-ethyl-4-methylthiazole-2-carboxylate + nicotinamide + 3 H2O + 2 H(+). In terms of biological role, involved in biosynthesis of the thiamine precursor thiazole. Catalyzes the conversion of NAD and glycine to adenosine diphosphate 5-(2-hydroxyethyl)-4-methylthiazole-2-carboxylic acid (ADT), an adenylated thiazole intermediate. The reaction includes an iron-dependent sulfide transfer from a conserved cysteine residue of the protein to a thiazole intermediate. The enzyme can only undergo a single turnover, which suggests it is a suicide enzyme. May have additional roles in adaptation to various stress conditions and in DNA damage tolerance. This chain is Thiamine thiazole synthase, found in Aspergillus fumigatus (strain ATCC MYA-4609 / CBS 101355 / FGSC A1100 / Af293) (Neosartorya fumigata).